Here is a 321-residue protein sequence, read N- to C-terminus: Small ribosomal subunit biogenesis GTPase RsgA (321 aa).

A CP-type G domain is found at 89-248; sequence QSWINRPPVA…VADTPGFNRP (160 aa). GTP contacts are provided by residues 138–141 and 190–198; these read TKRD and GPSGVGKTS. 4 residues coordinate Zn(2+): Cys-273, Cys-278, His-280, and Cys-286.

It belongs to the TRAFAC class YlqF/YawG GTPase family. RsgA subfamily. In terms of assembly, monomer. Associates with 30S ribosomal subunit, binds 16S rRNA. Zn(2+) serves as cofactor.

It is found in the cytoplasm. In terms of biological role, one of several proteins that assist in the late maturation steps of the functional core of the 30S ribosomal subunit. Helps release RbfA from mature subunits. May play a role in the assembly of ribosomal proteins into the subunit. Circularly permuted GTPase that catalyzes slow GTP hydrolysis, GTPase activity is stimulated by the 30S ribosomal subunit. In Prochlorococcus marinus (strain MIT 9313), this protein is Small ribosomal subunit biogenesis GTPase RsgA.